The chain runs to 137 residues: Endoribonuclease YbeY (137 aa).

Residues histidine 105, histidine 109, and aspartate 115 each contribute to the Zn(2+) site.

Belongs to the endoribonuclease YbeY family. Zn(2+) serves as cofactor.

The protein localises to the cytoplasm. Single strand-specific metallo-endoribonuclease involved in late-stage 70S ribosome quality control and in maturation of the 3' terminus of the 16S rRNA. The sequence is that of Endoribonuclease YbeY from Chlorobaculum tepidum (strain ATCC 49652 / DSM 12025 / NBRC 103806 / TLS) (Chlorobium tepidum).